A 102-amino-acid polypeptide reads, in one-letter code: UPF0213 protein Spro_0507 (102 aa).

Residues 6–81 enclose the GIY-YIG domain; the sequence is PTWHLYMLRM…KQLSKTQKER (76 aa).

It belongs to the UPF0213 family.

The chain is UPF0213 protein Spro_0507 from Serratia proteamaculans (strain 568).